Consider the following 110-residue polypeptide: MHEMSITQSVVEICEKSAGGRRVLAVTLEIGDLSGVVPDAIEFCFEACTRDTLLEGARLVIERVPGRGECTSCGKEFPVRGYFDPCPACGAYGMRVVSGEELRVKELEVE.

Residue H2 coordinates Ni(2+). C70, C73, C86, and C89 together coordinate Zn(2+).

The protein belongs to the HypA/HybF family.

Its function is as follows. Involved in the maturation of [NiFe] hydrogenases. Required for nickel insertion into the metal center of the hydrogenase. This Geobacter metallireducens (strain ATCC 53774 / DSM 7210 / GS-15) protein is Hydrogenase maturation factor HypA.